A 29-amino-acid chain; its full sequence is Glucagon (29 aa).

Phosphoserine is present on Ser2.

This sequence belongs to the glucagon family.

The protein resides in the secreted. In terms of biological role, glucagon plays a key role in glucose metabolism and homeostasis. Regulates blood glucose by increasing gluconeogenesis and decreasing glycolysis. The sequence is that of Glucagon (GCG) from Chinchilla chinchilla (Short-tailed chinchilla).